The following is a 335-amino-acid chain: tRNA-splicing endonuclease (335 aa).

Residues tyrosine 269, histidine 280, and lysine 311 contribute to the active site.

Belongs to the tRNA-intron endonuclease family. Archaeal long subfamily. In terms of assembly, homodimer.

The enzyme catalyses pretRNA = a 3'-half-tRNA molecule with a 5'-OH end + a 5'-half-tRNA molecule with a 2',3'-cyclic phosphate end + an intron with a 2',3'-cyclic phosphate and a 5'-hydroxyl terminus.. Its function is as follows. Endonuclease that removes tRNA introns. Cleaves pre-tRNA at the 5'- and 3'-splice sites to release the intron. The products are an intron and two tRNA half-molecules bearing 2',3' cyclic phosphate and 5'-OH termini. Recognizes a pseudosymmetric substrate in which 2 bulged loops of 3 bases are separated by a stem of 4 bp. The polypeptide is tRNA-splicing endonuclease (Haloarcula marismortui (strain ATCC 43049 / DSM 3752 / JCM 8966 / VKM B-1809) (Halobacterium marismortui)).